Here is a 491-residue protein sequence, read N- to C-terminus: Iota-carrageenase (491 aa).

The signal sequence occupies residues 1 to 19 (MKLQFKPVYLASIAIMAIG). Residues C422 and C490 are joined by a disulfide bond.

It belongs to the glycosyl hydrolase 82 family.

Its subcellular location is the secreted. The catalysed reaction is Endohydrolysis of 1,4-beta-D-linkages between D-galactose 4-sulfate and 3,6-anhydro-D-galactose-2-sulfate in iota-carrageenans.. Its function is as follows. Hydrolyzes iota-carrageenans, sulfated 1,3-alpha-1,4-beta galactans from red algal cell walls, with an inversion of anomeric configuration. Also active against hybrid iota-/nu-carrageenan, not active against kappa- or lambda-carrageenans. The polypeptide is Iota-carrageenase (Zobellia galactanivorans (strain DSM 12802 / CCUG 47099 / CIP 106680 / NCIMB 13871 / Dsij)).